An 801-amino-acid chain; its full sequence is Heavy metal tolerance factor 1 (801 aa).

Residues Met-1–Lys-24 lie on the Lumenal side of the membrane. The helical transmembrane segment at Ile-25–Pro-45 threads the bilayer. The Cytoplasmic segment spans residues Asn-46–Ser-75. The chain crosses the membrane as a helical span at residues Ile-76–Phe-96. At His-97–His-101 the chain is on the lumenal side. The chain crosses the membrane as a helical span at residues Leu-102–Ser-122. Topologically, residues Lys-123–Ser-129 are cytoplasmic. Residues Thr-130 to Thr-150 form a helical membrane-spanning segment. Topologically, residues Asp-151–Thr-167 are lumenal. Residues Phe-168 to Leu-188 form a helical membrane-spanning segment. Residues Phe-189–Arg-226 are Cytoplasmic-facing. A helical transmembrane segment spans residues Val-227 to Leu-247. The ABC transmembrane type-1 domain maps to Val-227 to Lys-516. The Lumenal segment spans residues Ser-248–Ser-264. The helical transmembrane segment at Leu-265–Leu-285 threads the bilayer. The Cytoplasmic portion of the chain corresponds to Asn-286–Asn-341. The helical transmembrane segment at Ile-342–Phe-364 threads the bilayer. Residues Phe-365–Tyr-371 lie on the Lumenal side of the membrane. The helical transmembrane segment at Phe-372 to Ile-390 threads the bilayer. At Thr-391 to Asn-461 the chain is on the cytoplasmic side. Residues Ala-462–Glu-482 form a helical membrane-spanning segment. At Lys-483–Asp-489 the chain is on the lumenal side. The helical transmembrane segment at Tyr-490–Ile-510 threads the bilayer. At Tyr-511 to Pro-801 the chain is on the cytoplasmic side. Positions Ile-550 to Ala-784 constitute an ABC transporter domain. Gly-583 to Ser-590 lines the ATP pocket.

Belongs to the ABC transporter superfamily. ABCB family. Heavy Metal importer (TC 3.A.1.210) subfamily. Expressed in coelomocytes, as well as in head and tail neurons, and in the intestinal cells.

The protein localises to the vacuole membrane. The protein resides in the early endosome. It localises to the late endosome. It is found in the recycling endosome. In terms of biological role, may play a pivotal role in the detoxification of heavy metals such as cadmium but do not depend exclusively on phytochelatins (PC) synthesis. This Caenorhabditis elegans protein is Heavy metal tolerance factor 1.